The sequence spans 392 residues: Formate-dependent phosphoribosylglycinamide formyltransferase (392 aa).

N(1)-(5-phospho-beta-D-ribosyl)glycinamide is bound by residues 22 to 23 and Glu82; that span reads EL. ATP-binding positions include Arg114, Lys155, 160–165, 195–198, and Glu203; these read SSGKGQ and EGVV. The ATP-grasp domain occupies 119-308; sequence RLAAEELGLP…EFALHVRAFL (190 aa). Positions 267 and 279 each coordinate Mg(2+). N(1)-(5-phospho-beta-D-ribosyl)glycinamide-binding positions include Asp286, Lys355, and 362-363; that span reads RR.

The protein belongs to the PurK/PurT family. In terms of assembly, homodimer.

The enzyme catalyses N(1)-(5-phospho-beta-D-ribosyl)glycinamide + formate + ATP = N(2)-formyl-N(1)-(5-phospho-beta-D-ribosyl)glycinamide + ADP + phosphate + H(+). It participates in purine metabolism; IMP biosynthesis via de novo pathway; N(2)-formyl-N(1)-(5-phospho-D-ribosyl)glycinamide from N(1)-(5-phospho-D-ribosyl)glycinamide (formate route): step 1/1. Its function is as follows. Involved in the de novo purine biosynthesis. Catalyzes the transfer of formate to 5-phospho-ribosyl-glycinamide (GAR), producing 5-phospho-ribosyl-N-formylglycinamide (FGAR). Formate is provided by PurU via hydrolysis of 10-formyl-tetrahydrofolate. This Salmonella paratyphi A (strain ATCC 9150 / SARB42) protein is Formate-dependent phosphoribosylglycinamide formyltransferase.